Reading from the N-terminus, the 101-residue chain is Replication restart protein PriB (101 aa).

The SSB domain occupies 1 to 101; the sequence is MTTNNLVLAG…LHAENVELKT (101 aa).

It belongs to the PriB family. In terms of assembly, homodimer. Interacts with PriA and DnaT. Component of the replication restart primosome. Primosome assembly occurs via a 'hand-off' mechanism. PriA binds to replication forks, subsequently PriB then DnaT bind; DnaT then displaces ssDNA to generate the helicase loading substrate.

Involved in the restart of stalled replication forks, which reloads the replicative helicase on sites other than the origin of replication; the PriA-PriB pathway is the major replication restart pathway. During primosome assembly it facilitates complex formation between PriA and DnaT on DNA; stabilizes PriA on DNA. Stimulates the DNA unwinding activity of PriA helicase. The sequence is that of Replication restart protein PriB from Shewanella halifaxensis (strain HAW-EB4).